A 528-amino-acid chain; its full sequence is Beta-hexosaminidase subunit alpha (528 aa).

The N-terminal stretch at 1–22 (MAGCRLWVSLLLAAALACLATA) is a signal peptide. Residues 23–88 (LWPWPQYIQT…PRPSFSKKQQ (66 aa)) constitute a propeptide that is removed on maturation. Cysteine 58 and cysteine 104 are joined by a disulfide. Residues asparagine 115, asparagine 157, and asparagine 295 are each glycosylated (N-linked (GlcNAc...) asparagine). Residues cysteine 277 and cysteine 328 are joined by a disulfide bond. Glutamate 323 functions as the Proton donor in the catalytic mechanism. Residues 422–423 (NR) form a critical for hydrolysis GM2 gangliosides region. Residue asparagine 487 is glycosylated (N-linked (GlcNAc...) asparagine). The cysteines at positions 504 and 521 are disulfide-linked.

It belongs to the glycosyl hydrolase 20 family. In terms of assembly, there are 3 beta-hexosaminidase isozymes: isozyme A (hexosaminidase A) is a heterodimer composed of one subunit alpha and one subunit beta (chain A and B); isozyme B (hexosaminidase B) is a homodimer of two beta subunits (two chains A and B); isozyme S (hexosaminidase S) is a homodimer of two alpha subunits. The composition of the dimer (isozyme A versus isozyme S) has a significant effect on the substrate specificity of the alpha subunit active site.

Its subcellular location is the lysosome. It catalyses the reaction Hydrolysis of terminal non-reducing N-acetyl-D-hexosamine residues in N-acetyl-beta-D-hexosaminides.. It carries out the reaction N-acetyl-beta-D-galactosaminyl-(1-&gt;4)-beta-D-3-sulfogalactosyl-(1-&gt;4)-beta-D-glucosyl-(1&lt;-&gt;1')-ceramide + H2O = a beta-D-3-sulfogalactosyl-(1-&gt;4)-beta-D-glucosyl-(1&lt;-&gt;1')-ceramide + N-acetyl-beta-D-galactosamine. The enzyme catalyses a ganglioside GM2 (d18:1(4E)) + H2O = a ganglioside GM3 (d18:1(4E)) + N-acetyl-beta-D-galactosamine. The catalysed reaction is a ganglioside GM2 + H2O = a ganglioside GM3 + N-acetyl-beta-D-galactosamine. It catalyses the reaction beta-D-GalNAc-(1-&gt;4)-alpha-L-IdoA-(1-&gt;3)-beta-D-GalNAc-4-sulfate-(1-&gt;4)-alpha-L-IdoA-(1-&gt;3)-D-GalNAc-4-sulfate + H2O = alpha-L-IdoA-(1-&gt;3)-beta-D-GalNAc-4-sulfate-(1-&gt;4)-alpha-L-IdoA-(1-&gt;3)-D-GalNAc-4-sulfate + N-acetyl-D-galactosamine. It carries out the reaction N-acetyl-beta-D-6-sulfogalactosaminyl-(1-&gt;4)-alpha-L-iduronyl-(1-&gt;3)-N-acetyl-D-6-sulfogalactosamine + H2O = alpha-L-iduronyl-(1-&gt;3)-N-acetyl-D-6-sulfogalactosamine + N-acetyl-D-6-sulfogalactosamine. Addition of GM2A stimulates the hydrolysis of sulfated glycosphingolipid SM2 and the ganglioside GM2. In terms of biological role, hydrolyzes the non-reducing end N-acetyl-D-hexosamine and/or sulfated N-acetyl-D-hexosamine of glycoconjugates, such as the oligosaccharide moieties from proteins and neutral glycolipids, or from certain mucopolysaccharides. The isozyme S is as active as the isozyme A on the anionic bis-sulfated glycans, the chondroitin-6-sulfate trisaccharide (C6S-3), and the dermatan sulfate pentasaccharide, and the sulfated glycosphingolipid SM2. The isozyme B does not hydrolyze each of these substrates, however hydrolyzes efficiently neutral oligosaccharide. Only the isozyme A is responsible for the degradation of GM2 gangliosides in the presence of GM2A. The polypeptide is Beta-hexosaminidase subunit alpha (Rattus norvegicus (Rat)).